A 297-amino-acid chain; its full sequence is Occlusion-derived virus envelope protein E27 (297 aa).

Belongs to the baculoviridae E27 family. As to quaternary structure, interacts with host mus209/PCNA, cdc2 and cdk6.

It localises to the virion membrane. In terms of biological role, acts as a cyclin-like protein and plays a role in the modulation of host cell cycle. May promote G2/S arrest by interacting with host mus209/PCNA, cdc2 and cdk6. The cell cycle arrest is characterized by an intact nuclear envelope, concomitant with sustained activity of host cdc2. However, viral DNA replication still occurs in the arrested cells. The chain is Occlusion-derived virus envelope protein E27 from Orgyia pseudotsugata multicapsid polyhedrosis virus (OpMNPV).